The primary structure comprises 303 residues: Acetylxylan esterase A (303 aa).

A signal peptide spans 1 to 23 (MLSTHLLFLATTLLTSLFHPIAA). Ser-147 acts as the Charge relay system in catalysis. Asn-189 carries an N-linked (GlcNAc...) asparagine glycan.

This sequence belongs to the carbohydrate esterase 1 (CE1) family. AxeA subfamily. As to quaternary structure, monomer. Post-translationally, glycosylated.

Its subcellular location is the secreted. It carries out the reaction Deacetylation of xylans and xylo-oligosaccharides.. It participates in glycan degradation; xylan degradation. Functionally, acetylxylan esterase involved in the hydrolysis of xylan, a major structural heterogeneous polysaccharide found in plant biomass representing the second most abundant polysaccharide in the biosphere, after cellulose. Degrades acetylated xylans by cleaving acetyl side groups from the hetero-xylan backbone. The sequence is that of Acetylxylan esterase A (axeA) from Aspergillus ficuum.